A 549-amino-acid polypeptide reads, in one-letter code: Probable protein kinase UbiB (549 aa).

Residues 123-501 (DFNETPLASA…QQQAHKSNYL (379 aa)) enclose the Protein kinase domain. ATP is bound by residues 129–137 (LASASISQV) and K152. The active-site Proton acceptor is the D287. Transmembrane regions (helical) follow at residues 498-518 (SNYLLITSAILLICGTLLFNQ) and 520-540 (ATLWSPYVCLISGAALWIIGW).

This sequence belongs to the ABC1 family. UbiB subfamily.

It is found in the cell inner membrane. It participates in cofactor biosynthesis; ubiquinone biosynthesis [regulation]. In terms of biological role, is probably a protein kinase regulator of UbiI activity which is involved in aerobic coenzyme Q (ubiquinone) biosynthesis. The chain is Probable protein kinase UbiB from Shewanella sp. (strain MR-7).